We begin with the raw amino-acid sequence, 180 residues long: MAELATIARPYAEALYKACTDQAGVDLNGATAWVDELAAIAANPQLRQLADNPKVTGEQVFDVIVGVARSALPDLAKNFLRTVIDNGRVQALPEIAAQFRTLVNRSHGTSDAVVYSAFPLDAGALTDVGATLEKRFGRKLNLSVQLDETLIGGVRVVVGDEVLDTSVKARLEQMKAALTA.

The protein belongs to the ATPase delta chain family. As to quaternary structure, F-type ATPases have 2 components, F(1) - the catalytic core - and F(0) - the membrane proton channel. F(1) has five subunits: alpha(3), beta(3), gamma(1), delta(1), epsilon(1). F(0) has three main subunits: a(1), b(2) and c(10-14). The alpha and beta chains form an alternating ring which encloses part of the gamma chain. F(1) is attached to F(0) by a central stalk formed by the gamma and epsilon chains, while a peripheral stalk is formed by the delta and b chains.

The protein localises to the cell inner membrane. F(1)F(0) ATP synthase produces ATP from ADP in the presence of a proton or sodium gradient. F-type ATPases consist of two structural domains, F(1) containing the extramembraneous catalytic core and F(0) containing the membrane proton channel, linked together by a central stalk and a peripheral stalk. During catalysis, ATP synthesis in the catalytic domain of F(1) is coupled via a rotary mechanism of the central stalk subunits to proton translocation. In terms of biological role, this protein is part of the stalk that links CF(0) to CF(1). It either transmits conformational changes from CF(0) to CF(1) or is implicated in proton conduction. The protein is ATP synthase subunit delta of Acidovorax sp. (strain JS42).